The sequence spans 434 residues: Prenyltransferase penG (434 aa).

Composition is skewed to polar residues over residues 1-14 (MTQD…QTAG) and 21-35 (THSN…PSTW). The interval 1–35 (MTQDVVTVSSQTAGTIKESGTHSNPDNKTTSPSTW) is disordered. Residues 104–105 (EI) and Glu108 each bind L-tryptophan. Residues Arg122, Lys208, Arg275, Lys277, Tyr279, and Tyr348 each contribute to the substrate site.

Belongs to the tryptophan dimethylallyltransferase family.

The enzyme catalyses yaequinolone E + dimethylallyl diphosphate + H2O = [(1'E)-3'-hydroxy-3',7'-dimethylocta-1',6'-dien-1'-yl]-quinolinone B + diphosphate. Its pathway is secondary metabolite biosynthesis. The protein operates within alkaloid biosynthesis. It participates in mycotoxin biosynthesis. Its function is as follows. Prenyltransferase; part of the gene cluster that mediates the biosynthesis of penigequinolones, potent insecticidal alkaloids that contain a highly modified 10-carbon prenyl group. The first stage is catalyzed by the nonribosomal peptide synthetase penN that condenses anthranilic acid and O-methyl-L-tyrosine to produce 4'-methoxycyclopeptin. 4'-methoxycyclopeptin is then converted to 4'-methoxydehydrocyclopeptin by the ketoglutarate-dependent dioxygenase penM through dehydrogenation to form a double bond between C-alpha and C-beta of the O-methyltyrosine side chain. PenM also converts its first product methoxydehydrocyclopeptin to 4'-methoxycyclopenin. The following conversion of 4'methoxycyclopenin into 4'-methoxyviridicatin is catalyzed by the cyclopenase penL. 4'-methoxyviridicatin is the precursor of quinolone natural products, and is further converted to quinolinone B. The prenyltransferase penI then catalyzes the canonical Friedel-Crafts alkylation of quinolinone B with dimethylallyl cation to yield dimethylallyl quinolone, which is subjected to FAD-dependent dehydrogenation by the FAD-linked oxidoreductase penH to yield conjugated aryl diene. The delta(3') double bond then serves as the site of the second alkylation with DMAPP catalyzed by the prenyltransferase penG to yield a carbenium ion intermediate, which can be attacked by H(2)O to yield a styrenyl quinolone containing a C3'-hydroxyprenyl chain, or undergo cyclization to yield yaequinolones J1 and J2. The conversion of the styrenyl quinolone into the tetrahydrofuran-containing yaequinolone C is performed by the FAD-dependent monooxygenase penE and involves epoxidation of the terminal C7'-C8' olefin, followed by epoxide ring opening initiated by the C3' hydroxyl group. The predicted cysteine hydrolase penJ acts as an epoxide hydrolase that enhances the rate of the 5-exo-tet cyclization step, increasing the yield of yaequinolone C. PenF catalyzes the cationic rearrangement of the epoxide formed by penE (before ring opening to produce yaequinolone C) into yaequinolone D. Finally, the short-chain dehydrogenase/reductase (SDR)-like reductase penD, catalyzes both the dehydration of yaequinolone D and the reduction of the resulting oxonium to yield penigequinolone. The chain is Prenyltransferase penG from Penicillium thymicola.